Consider the following 612-residue polypeptide: Dihydroxy-acid dehydratase (612 aa).

Asp-81 lines the Mg(2+) pocket. Cys-122 contributes to the [2Fe-2S] cluster binding site. Asp-123 and Lys-124 together coordinate Mg(2+). Position 124 is an N6-carboxylysine (Lys-124). [2Fe-2S] cluster is bound at residue Cys-195. Glu-491 provides a ligand contact to Mg(2+). The active-site Proton acceptor is Ser-517.

This sequence belongs to the IlvD/Edd family. Homodimer. It depends on [2Fe-2S] cluster as a cofactor. Requires Mg(2+) as cofactor.

The catalysed reaction is (2R)-2,3-dihydroxy-3-methylbutanoate = 3-methyl-2-oxobutanoate + H2O. It catalyses the reaction (2R,3R)-2,3-dihydroxy-3-methylpentanoate = (S)-3-methyl-2-oxopentanoate + H2O. It participates in amino-acid biosynthesis; L-isoleucine biosynthesis; L-isoleucine from 2-oxobutanoate: step 3/4. Its pathway is amino-acid biosynthesis; L-valine biosynthesis; L-valine from pyruvate: step 3/4. Functionally, functions in the biosynthesis of branched-chain amino acids. Catalyzes the dehydration of (2R,3R)-2,3-dihydroxy-3-methylpentanoate (2,3-dihydroxy-3-methylvalerate) into 2-oxo-3-methylpentanoate (2-oxo-3-methylvalerate) and of (2R)-2,3-dihydroxy-3-methylbutanoate (2,3-dihydroxyisovalerate) into 2-oxo-3-methylbutanoate (2-oxoisovalerate), the penultimate precursor to L-isoleucine and L-valine, respectively. The protein is Dihydroxy-acid dehydratase of Rhizobium johnstonii (strain DSM 114642 / LMG 32736 / 3841) (Rhizobium leguminosarum bv. viciae).